Here is a 214-residue protein sequence, read N- to C-terminus: Glutathione S-transferase F11 (214 aa).

The region spanning 2-82 is the GST N-terminal domain; that stretch reads VVKVYGQIKA…YYATKYADQG (81 aa). Glutathione-binding positions include 11 to 12, 40 to 41, 53 to 54, and 66 to 67; these read AA, QK, QV, and ES. The GST C-terminal domain maps to 89–214; sequence TLEGRAIVDQ…WKKLMELAAY (126 aa).

It belongs to the GST superfamily. Phi family.

The protein localises to the cytoplasm. It is found in the cytosol. The catalysed reaction is RX + glutathione = an S-substituted glutathione + a halide anion + H(+). In terms of biological role, may be involved in the conjugation of reduced glutathione to a wide number of exogenous and endogenous hydrophobic electrophiles and have a detoxification role against certain herbicides. This Arabidopsis thaliana (Mouse-ear cress) protein is Glutathione S-transferase F11.